The chain runs to 179 residues: Protein LDB18 (179 aa).

Functionally, may be involved in protein-linked oligosaccharide phosphorylation since the deletion reduces the negative charge of the cell surface. The polypeptide is Protein LDB18 (LDB18) (Saccharomyces cerevisiae (strain ATCC 204508 / S288c) (Baker's yeast)).